Reading from the N-terminus, the 111-residue chain is Resistin-like beta (111 aa).

The first 23 residues, 1 to 23 (MGPSSCLLLILIPLLQLINPGST), serve as a signal peptide directing secretion. Intrachain disulfides connect Cys55/Cys108, Cys67/Cys107, Cys76/Cys93, Cys78/Cys95, and Cys82/Cys97.

The protein belongs to the resistin/FIZZ family. As to quaternary structure, homodimer; disulfide-linked. Expressed only in the gastrointestinal tract, particularly the colon.

Its subcellular location is the secreted. Probable hormone. The chain is Resistin-like beta (RETNLB) from Homo sapiens (Human).